The chain runs to 251 residues: Small ribosomal subunit protein uS2B (251 aa).

At S2 the chain carries N-acetylserine. Residues 214–225 (AVEEASATGATE) are compositionally biased toward low complexity. Residues 214–251 (AVEEASATGATEEATEEATEETTEATEWAEDNTENATW) form a disordered region. Residues 226–251 (EATEEATEETTEATEWAEDNTENATW) show a composition bias toward acidic residues.

The protein belongs to the universal ribosomal protein uS2 family. Component of the small ribosomal subunit. Mature ribosomes consist of a small (40S) and a large (60S) subunit. The 40S subunit contains about 33 different proteins and 1 molecule of RNA (18S). The 60S subunit contains about 49 different proteins and 3 molecules of RNA (25S, 5.8S and 5S). Interacts with RPS21.

It localises to the cytoplasm. Required for the assembly and/or stability of the 40S ribosomal subunit. Required for the processing of the 20S rRNA-precursor to mature 18S rRNA in a late step of the maturation of 40S ribosomal subunits. The chain is Small ribosomal subunit protein uS2B from Vanderwaltozyma polyspora (strain ATCC 22028 / DSM 70294 / BCRC 21397 / CBS 2163 / NBRC 10782 / NRRL Y-8283 / UCD 57-17) (Kluyveromyces polysporus).